The following is a 472-amino-acid chain: Glutamine synthetase (472 aa).

The region spanning 17 to 101 is the GS beta-grasp domain; that stretch reads NNVKFVLLRF…IRCSVYEPTT (85 aa). One can recognise a GS catalytic domain in the interval 109 to 472; it reads PRSIAIRAEN…HPVEFEMYYA (364 aa). Residues Glu-134 and Glu-136 each coordinate Mg(2+). Position 212 (Glu-212) interacts with ATP. Mg(2+) contacts are provided by Glu-217 and Glu-225. Residues 269–270 and Gly-270 contribute to the L-glutamate site; that span reads NG. His-274 lines the Mg(2+) pocket. ATP contacts are provided by residues 276–278 and Ser-278; that span reads NMS. 3 residues coordinate L-glutamate: Arg-326, Glu-332, and Arg-344. ATP is bound by residues Arg-344, Arg-349, and Lys-357. Glu-362 contacts Mg(2+). Position 364 (Arg-364) interacts with L-glutamate. O-AMP-tyrosine is present on Tyr-402.

This sequence belongs to the glutamine synthetase family. As to quaternary structure, oligomer of 12 subunits arranged in the form of two hexameric ring. Mg(2+) is required as a cofactor.

It is found in the cytoplasm. It carries out the reaction L-glutamate + NH4(+) + ATP = L-glutamine + ADP + phosphate + H(+). Its activity is regulated as follows. The activity of this enzyme could be controlled by adenylation under conditions of abundant glutamine. Functionally, catalyzes the ATP-dependent biosynthesis of glutamine from glutamate and ammonia. The polypeptide is Glutamine synthetase (Haemophilus influenzae (strain ATCC 51907 / DSM 11121 / KW20 / Rd)).